The sequence spans 217 residues: MNQTLLSEFGNPAERVERALDALRHGRGVLVLDDEDRENEGDMIFSAENMTVEQMALTIRHGSGIVCLCLTEERRQQLELPMMVEKNSSHYQTAFTVTIEAAEGVTTGVSAADRLTTIRAAIADNAKPSDLNRPGHVFPLRAQPGGVLTRGGHTEATVDLMTLAGLKPSGVLCELTNDDGSMAHAPEVIAFAKQHDMPVLTIEDLVAYRVAAERKAS.

D-ribulose 5-phosphate is bound by residues 37–38 (RE), Asp42, 150–154 (RGGHT), and Glu174. Glu38 serves as a coordination point for Mg(2+). His153 contacts Mg(2+).

It belongs to the DHBP synthase family. As to quaternary structure, homodimer. The cofactor is Mg(2+). Mn(2+) is required as a cofactor.

The catalysed reaction is D-ribulose 5-phosphate = (2S)-2-hydroxy-3-oxobutyl phosphate + formate + H(+). It functions in the pathway cofactor biosynthesis; riboflavin biosynthesis; 2-hydroxy-3-oxobutyl phosphate from D-ribulose 5-phosphate: step 1/1. Functionally, catalyzes the conversion of D-ribulose 5-phosphate to formate and 3,4-dihydroxy-2-butanone 4-phosphate. The polypeptide is 3,4-dihydroxy-2-butanone 4-phosphate synthase (Pectobacterium carotovorum subsp. carotovorum (strain PC1)).